The sequence spans 289 residues: Shikimate dehydrogenase (NADP(+)) (289 aa).

Residues 20–22 (SIS) and Ser-67 each bind shikimate. Lys-71 functions as the Proton acceptor in the catalytic mechanism. Residue Asp-83 coordinates NADP(+). Positions 92 and 107 each coordinate shikimate. NADP(+) is bound by residues 132–136 (GGGGA) and Val-230. Residue Tyr-232 coordinates shikimate. Gly-253 serves as a coordination point for NADP(+).

Belongs to the shikimate dehydrogenase family. In terms of assembly, homodimer.

The catalysed reaction is shikimate + NADP(+) = 3-dehydroshikimate + NADPH + H(+). It functions in the pathway metabolic intermediate biosynthesis; chorismate biosynthesis; chorismate from D-erythrose 4-phosphate and phosphoenolpyruvate: step 4/7. Its function is as follows. Involved in the biosynthesis of the chorismate, which leads to the biosynthesis of aromatic amino acids. Catalyzes the reversible NADPH linked reduction of 3-dehydroshikimate (DHSA) to yield shikimate (SA). The chain is Shikimate dehydrogenase (NADP(+)) from Streptococcus suis (strain 98HAH33).